An 815-amino-acid polypeptide reads, in one-letter code: Cilia- and flagella-associated protein 251 (815 aa).

10 WD repeats span residues 58–99 (GHTS…PTRT), 103–148 (PHRH…TPPE), 166–205 (PAGDVQHSIRFSPNNPAELISNGRRRVYFWSWAPGSPRFQ), 218–257 (QSVGDFVSSVFVPGTTQALTATTDGDLVVWDEQGIAAQVG), 271–308 (IHNCPITLLATVGDFIVSGGEDGYVRFFDPLLRIVAWF), 379–418 (SLLADVVDLAAHPTRAEFAVLGRDGGLQRWDSIAHCLLGG), 420–460 (AFER…DLYV), 463–502 (NTAAGLVRVAVSNTGKHIAAADENHQLLLYAYLPYKHTMR), 511–553 (SHHG…VAAG), and 573–612 (SFAPPLAYFQAFAADTHLLVSGADGTVASWDINTAPLERS).

In terms of assembly, identified in a spoke-associated complex containing CFAP61, CFAP91 and CFAP251; the complex is associated with the radial spokes in the axoneme. The complex associates with Calmodulin; the association is calcium sensitive.

It is found in the cytoplasm. It localises to the cytoskeleton. The protein resides in the flagellum axoneme. Functionally, as component of a spoke-associated complex, regulates flagellar dynein activity by mediating regulatory signals between the radial spokes and dynein arms. The protein is Cilia- and flagella-associated protein 251 of Chlamydomonas reinhardtii (Chlamydomonas smithii).